A 479-amino-acid chain; its full sequence is Sodium-coupled neutral amino acid transporter 5 (479 aa).

The Cytoplasmic portion of the chain corresponds to 1–58 (MAISCAVGMEMQEPKMNGTLSTGAAAGYRQEREGFLPTTHGPAPGRKPVQFLDFEGKT). A helical membrane pass occupies residues 59-81 (SFGMSVFNLSNAIMGSGILGLAY). Over 82–97 (AMAHTGVIFFLALLLC) the chain is Extracellular. Residues 98–118 (IALLSSYSIHLLLTCASVVGI) traverse the membrane as a helical segment. At 119-135 (RAYEQLGQRAFGPAGKV) the chain is on the cytoplasmic side. A helical membrane pass occupies residues 136 to 156 (VVAIIICLHNVGAMSSYLFII). Residues 157–176 (KSELPLVIGTFLHMDPEGDW) lie on the Extracellular side of the membrane. Residues 177–197 (FLKGNLLIILVSLLIILPLAL) traverse the membrane as a helical segment. Residues 198–202 (MKHLG) lie on the Cytoplasmic side of the membrane. A helical membrane pass occupies residues 203-223 (YLGYTSSLSLTCMLFFLISVI). Over 224-264 (YKKFQLGCVVSHNDTVVESEPAPLQAFNSSCEAKLFTVDSQ) the chain is Extracellular. The cysteines at positions 231 and 254 are disulfide-linked. Asn-236 carries an N-linked (GlcNAc...) asparagine glycan. Residues 265–285 (MSYTVPIMAFAFVCHPEVLPI) traverse the membrane as a helical segment. The Cytoplasmic portion of the chain corresponds to 286–302 (YTELCCPTQRRMQAVAN). Residues 303 to 323 (MSIGAMFIMYGLTATFGYLTF) form a helical membrane-spanning segment. Topologically, residues 324–341 (YSTVKAEMLEMYTQEDLL) are extracellular. A helical transmembrane segment spans residues 342-362 (ILCVRLAVLLAVTLTVPVVLF). At 363-383 (PIRRALQQLLFPSKAFSWPRH) the chain is on the cytoplasmic side. Residues 384 to 404 (VAIALILLILVNILVICVPTI) form a helical membrane-spanning segment. Residues 405–406 (RD) are Extracellular-facing. A helical membrane pass occupies residues 407–427 (IFGFIGSTSAPSLIFILPSVF). Topologically, residues 428 to 446 (YLRIVPADMEPLFSWPKIQ) are cytoplasmic. A helical transmembrane segment spans residues 447-467 (ALCFGVLGVLFMAISLGFMFA). At 468 to 479 (NWATGQSRMSGH) the chain is on the extracellular side.

This sequence belongs to the amino acid/polyamine transporter 2 family. As to expression, highly expressed in neocortex, hippocampus, striatum and spinal cord by astrocytes (at protein level). Expressed in brain, lung, stomach, kidney, spleen and testis. Expressed in the cerebral cortex between the second and third postnatal week, where expressed exclusively in glial cells from postnatal day 14 to adulthood (at protein level). Expressed in the cerebellum at post natal day 12 (P12). Expressed in liver. Expressed inside the cell body of the astrocytes.

It is found in the cell membrane. It catalyses the reaction L-serine(out) + Na(+)(out) + H(+)(in) = L-serine(in) + Na(+)(in) + H(+)(out). The catalysed reaction is L-alanine(out) + Na(+)(out) + H(+)(in) = L-alanine(in) + Na(+)(in) + H(+)(out). It carries out the reaction glycine(out) + Na(+)(out) + H(+)(in) = glycine(in) + Na(+)(in) + H(+)(out). The enzyme catalyses L-glutamine(out) + Na(+)(out) + H(+)(in) = L-glutamine(in) + Na(+)(in) + H(+)(out). It catalyses the reaction L-asparagine(out) + Na(+)(out) + H(+)(in) = L-asparagine(in) + Na(+)(in) + H(+)(out). The catalysed reaction is L-histidine(out) + Na(+)(out) + H(+)(in) = L-histidine(in) + Na(+)(in) + H(+)(out). It carries out the reaction L-cysteine(out) + Na(+)(out) + H(+)(in) = L-cysteine(in) + Na(+)(in) + H(+)(out). Its activity is regulated as follows. Not inhibited by lithium. Partial allosteric regulation on ions sodium binding. In terms of biological role, symporter that cotransports neutral amino acids and sodium ions, coupled to an H(+) antiporter activity. Releases L-glutamine and glycine from astroglial cells and may participate in the glutamate/GABA-glutamine cycle and the NMDA receptors activation. In addition contributes significantly to L-glutamine uptake in retina, namely in ganglion and Mueller cells and, therefore participates in the retinal glutamate-glutamine cycle. The transport activity is pH sensitive, Li(+) tolerant, bidirectional and associated with large uncoupled fluxes of protons. The transport is electroneutral coupled to the cotransport of 1 Na(+) and the antiport of 1 H(+). May have particular importance for modulation of net hepatic glutamine flux. The protein is Sodium-coupled neutral amino acid transporter 5 of Rattus norvegicus (Rat).